Reading from the N-terminus, the 218-residue chain is Small ribosomal subunit protein uS5 (218 aa).

The region spanning 55–118 (LDHEVIDVSI…RNAKLNIIPV (64 aa)) is the S5 DRBM domain.

The protein belongs to the universal ribosomal protein uS5 family. Part of the 30S ribosomal subunit. Contacts protein S4.

With S4 and S12 plays an important role in translational accuracy. This chain is Small ribosomal subunit protein uS5, found in Aeropyrum pernix (strain ATCC 700893 / DSM 11879 / JCM 9820 / NBRC 100138 / K1).